A 536-amino-acid chain; its full sequence is 2-isopropylmalate synthase (536 aa).

A Pyruvate carboxyltransferase domain is found at 8-269 (IIIFDTTLRD…YYNPFLGRPV (262 aa)). Positions 17, 208, 210, and 244 each coordinate Mn(2+). The tract at residues 408–536 (RLELVQVSCG…KEKAAVTSAS (129 aa)) is regulatory domain.

Belongs to the alpha-IPM synthase/homocitrate synthase family. LeuA type 1 subfamily. As to quaternary structure, homodimer. Requires Mn(2+) as cofactor.

The protein resides in the cytoplasm. It carries out the reaction 3-methyl-2-oxobutanoate + acetyl-CoA + H2O = (2S)-2-isopropylmalate + CoA + H(+). It participates in amino-acid biosynthesis; L-leucine biosynthesis; L-leucine from 3-methyl-2-oxobutanoate: step 1/4. In terms of biological role, catalyzes the condensation of the acetyl group of acetyl-CoA with 3-methyl-2-oxobutanoate (2-ketoisovalerate) to form 3-carboxy-3-hydroxy-4-methylpentanoate (2-isopropylmalate). The chain is 2-isopropylmalate synthase from Gloeothece citriformis (strain PCC 7424) (Cyanothece sp. (strain PCC 7424)).